A 453-amino-acid polypeptide reads, in one-letter code: UDP-glycosyltransferase 79B3 (453 aa).

UDP-alpha-D-glucose contacts are provided by residues Ser-266, 325-327 (VQQ), 342-350 (HCGFGSMWE), and 364-367 (LGDQ).

Belongs to the UDP-glycosyltransferase family.

The protein is UDP-glycosyltransferase 79B3 (UGT79B3) of Arabidopsis thaliana (Mouse-ear cress).